We begin with the raw amino-acid sequence, 198 residues long: Glycerol-3-phosphate acyltransferase (198 aa).

A run of 3 helical transmembrane segments spans residues 5–25 (AVILVIGLSYLVGSVPTGYLI), 114–134 (VLIMLPPVALATAAAVWIAVL), and 154–176 (AFALGGVGWRHVLFGLFLALVAV).

This sequence belongs to the PlsY family. As to quaternary structure, probably interacts with PlsX.

The protein localises to the cell membrane. The enzyme catalyses an acyl phosphate + sn-glycerol 3-phosphate = a 1-acyl-sn-glycero-3-phosphate + phosphate. The protein operates within lipid metabolism; phospholipid metabolism. Its function is as follows. Catalyzes the transfer of an acyl group from acyl-phosphate (acyl-PO(4)) to glycerol-3-phosphate (G3P) to form lysophosphatidic acid (LPA). This enzyme utilizes acyl-phosphate as fatty acyl donor, but not acyl-CoA or acyl-ACP. The chain is Glycerol-3-phosphate acyltransferase from Desulforudis audaxviator (strain MP104C).